A 96-amino-acid chain; its full sequence is NADH-ubiquinone oxidoreductase chain 4L (96 aa).

The next 3 membrane-spanning stretches (helical) occupy residues 1-21, 27-47, and 61-81; these read MELM…ALSL, MLAL…LVMF, and IILL…VVAI.

The protein belongs to the complex I subunit 4L family.

It localises to the mitochondrion membrane. The catalysed reaction is a ubiquinone + NADH + 5 H(+)(in) = a ubiquinol + NAD(+) + 4 H(+)(out). Functionally, core subunit of the mitochondrial membrane respiratory chain NADH dehydrogenase (Complex I) which catalyzes electron transfer from NADH through the respiratory chain, using ubiquinone as an electron acceptor. Part of the enzyme membrane arm which is embedded in the lipid bilayer and involved in proton translocation. The sequence is that of NADH-ubiquinone oxidoreductase chain 4L (MT-ND4L) from Lycodon semicarinatus (Ryukyu odd-tooth snake).